Consider the following 656-residue polypeptide: uncharacterized protein (656 aa).

2 disordered regions span residues 1-41 (MMAT…ESEG) and 60-88 (SNKV…HNLE). Residues 22 to 36 (SDSSDSGSDVSFFSV) are compositionally biased toward low complexity. A Phosphoserine modification is found at S39. A compositionally biased stretch (basic and acidic residues) spans 62 to 78 (KVEKDSDSEQRGRKKET).

It is found in the cytoplasm. Its subcellular location is the mitochondrion. This is an uncharacterized protein from Saccharomyces cerevisiae (strain ATCC 204508 / S288c) (Baker's yeast).